The primary structure comprises 456 residues: Putative E3 ubiquitin-protein ligase XBAT31 (456 aa).

ANK repeat units follow at residues 45-74, 78-107, 112-141, 157-186, and 194-224; these read DRHS…NPDL, HKQT…NILM, NRRT…SSPV, KGAT…LVCA, and PGST…RLQR. The segment at 319-368 adopts an RING-type zinc-finger fold; sequence CCICFEQVCTIEVKDCGHQMCAQCTLALCCHNKPNPTTSTVTPPVCPFCR.

The enzyme catalyses S-ubiquitinyl-[E2 ubiquitin-conjugating enzyme]-L-cysteine + [acceptor protein]-L-lysine = [E2 ubiquitin-conjugating enzyme]-L-cysteine + N(6)-ubiquitinyl-[acceptor protein]-L-lysine.. The protein operates within protein modification; protein ubiquitination. Functionally, no E3 ubiquitin-protein ligase activity observed when associated with the E2 enzyme UBC8 in vitro. The protein is Putative E3 ubiquitin-protein ligase XBAT31 (XBAT31) of Arabidopsis thaliana (Mouse-ear cress).